The following is an 82-amino-acid chain: Small ribosomal subunit protein uS17 (82 aa).

This sequence belongs to the universal ribosomal protein uS17 family. Part of the 30S ribosomal subunit.

Its function is as follows. One of the primary rRNA binding proteins, it binds specifically to the 5'-end of 16S ribosomal RNA. This is Small ribosomal subunit protein uS17 from Sulfurimonas denitrificans (strain ATCC 33889 / DSM 1251) (Thiomicrospira denitrificans (strain ATCC 33889 / DSM 1251)).